Here is a 1372-residue protein sequence, read N- to C-terminus: MLSFVDTRTLLLLAVTSCLATCQYLQSGSVRKGPTGDRGPRGQRGPAGPRGRDGVDGPMGPPGPPGSPGPPGSPAPPGLTGNFAAQYSDKGVSSGPGPMGLMGPRGPPGAVGAPGPQGFQGPAGEPGEPGQTGPAGPRGPAGSPGKAGEDGHPGKPGRPGERGVVGPQGARGFPGTPGLPGFKGVKGHSGMDGLKGQPGAQGVKGEPGAPGENGTPGQAGARGLPGERGRVGAPGPAGARGSDGSVGPVGPAGPIGSAGPPGFPGAPGPKGELGPVGNPGPAGPAGPRGEVGLPGLSGPVGPPGNPGTNGLTGAKGATGLPGVAGAPGLPGPRGIPGPAGAAGATGARGLVGEPGPAGSKGESGNKGEPGSVGAQGPPGPSGEEGKRGSPGEAGSAGPAGPPGLRGSPGSRGLPGADGRAGVMGPPGNRGSTGPAGIRGPNGDAGRPGEPGLMGPRGLPGSPGNVGPSGKEGPVGLPGIDGRPGPIGPAGPRGEAGNIGFPGPKGPSGDPGKPGERGHPGLAGARGAPGPDGNNGAQGPPGPQGVQGGKGEQGPAGPPGFQGLPGPSGTTGEVGKPGERGLPGEFGLPGPAGPRGERGTPGESGAAGPSGPIGSRGPSGAPGPDGNKGEAGAVGAPGSAGASGPGGLPGERGAAGIPGGKGEKGETGLRGDTGNTGRDGARGIPGAVGAPGPAGASGDRGEAGAAGPSGPAGPRGSPGERGEVGPAGPNGFAGPAGAAGQPGAKGEKGTKGPKGENGIVGPTGSVGAAGPSGPNGPPGPVGSRGDGGPPGMTGFPGAAGRTGPPGPSGIAGPPGPPGAAGKEGIRGPRGDQGPVGRTGETGASGPPGFVGEKGPSGEPGTAGAPGTAGPQGLLGAPGILGLPGSRGERGLPGIAGALGEPGPLGISGPPGARGPPGAVGSPGVNGAPGEAGRDGNPGSDGPPGRDGQPGHKGERGYPGSIGPTGAAGAPGPHGSVGPAGKHGNRGEPGPAGSVGPVGAVGPRGPSGPQGIRGDKGEPGDKGHRGLPGLKGYSGLQGLPGLAGLHGDQGAPGPVGPAGPRGPAGPSGPVGKDGRSGQPGPVGPAGVRGSQGSQGPAGPPGPPGPPGPPGVSGGGYDFGFEGDFYRADQPRSQPSLRPKDYEVDATLKSLNNQIETLLTPEGSRKNPARTCRDLRLSHPEWNSDYYWIDPNQGCTMDAIKVYCDFSTGETCIQAQPVNTPAKNSYSRAQANKHVWLGETINGGSQFEYNVEGVSSKEMATQLAFMRLLANRASQNITYHCKNSIAYLDEETGSLNKAVLLQGSNDVELVAEGNSRFTYSVLVDGCSKKTNEWGKTIIEYKTNKPSRLPFLDIAPLDIGGADQEFRVEVGPVCFK.

A signal peptide spans 1–22 (MLSFVDTRTLLLLAVTSCLATC). A Pyrrolidone carboxylic acid modification is found at glutamine 23. Positions 23–85 (QYLQSGSVRK…PPGLTGNFAA (63 aa)) are cleaved as a propeptide — N-terminal propeptide. The tract at residues 28–1135 (GSVRKGPTGD…DQPRSQPSLR (1108 aa)) is disordered. Pro residues predominate over residues 59–77 (MGPPGPPGSPGPPGSPAPP). Position 90 is an allysine (lysine 90). The segment covering 95 to 146 (GPGPMGLMGPRGPPGAVGAPGPQGFQGPAGEPGEPGQTGPAGPRGPAGSPGK) has biased composition (low complexity). The span at 147-161 (AGEDGHPGKPGRPGE) shows a compositional bias: basic and acidic residues. Residue lysine 183 is modified to 5-hydroxylysine; alternate. A glycan (O-linked (Gal...) hydroxylysine; alternate) is linked at lysine 183. Low complexity-rich tracts occupy residues 231–260 (VGAP…SAGP), 285–299 (AGPR…LSGP), 306–327 (PGTN…AGAP), 336–351 (PGPA…RGLV), 390–416 (PGEA…LPGA), 476–495 (LPGI…RGEA), and 519–537 (PGLA…NGAQ). The span at 544–553 (GVQGGKGEQG) shows a compositional bias: gly residues. Over residues 600-639 (PGESGAAGPSGPIGSRGPSGAPGPDGNKGEAGAVGAPGSA) the composition is skewed to low complexity. A compositionally biased stretch (gly residues) spans 640–649 (GASGPGGLPG). Composition is skewed to low complexity over residues 681–716 (RGIP…PRGS) and 725–743 (PAGP…QPGA). Positions 744 to 753 (KGEKGTKGPK) are enriched in basic and acidic residues. Residues 755–771 (ENGIVGPTGSVGAAGPS) are compositionally biased toward low complexity. The span at 781-790 (GSRGDGGPPG) shows a compositional bias: gly residues. Low complexity-rich tracts occupy residues 792–801 (TGFPGAAGRT), 855–882 (SGEP…LGLP), 905–927 (ISGP…NGAP), 957–978 (PGSI…VGPA), and 987–1007 (PGPA…PSGP). Residues 1011 to 1022 (RGDKGEPGDKGH) are compositionally biased toward basic and acidic residues. Positions 1095–1107 (AGPPGPPGPPGPP) are enriched in pro residues. Positions 1126 to 1372 (DQPRSQPSLR…RVEVGPVCFK (247 aa)) are cleaved as a propeptide — C-terminal propeptide. Residues 1139–1372 (YEVDATLKSL…RVEVGPVCFK (234 aa)) enclose the Fibrillar collagen NC1 domain. 3 disulfides stabilise this stretch: cysteine 1169-cysteine 1201, cysteine 1209-cysteine 1370, and cysteine 1278-cysteine 1323. Ca(2+)-binding residues include aspartate 1187, asparagine 1189, glutamine 1190, cysteine 1192, and aspartate 1195. N-linked (GlcNAc...) asparagine glycosylation is present at asparagine 1273.

The protein belongs to the fibrillar collagen family. As to quaternary structure, trimers of one alpha 2(I) and two alpha 1(I) chains. Interacts (via C-terminus) with TMEM131 (via PapD-L domain); the interaction is direct and is involved in assembly and TRAPPIII ER-to-Golgi transport complex-dependent secretion of collagen. In terms of processing, prolines at the third position of the tripeptide repeating unit (G-X-Y) are hydroxylated in some or all of the chains. As to expression, expressed in kidney glomeruli.

It is found in the secreted. It localises to the extracellular space. The protein resides in the extracellular matrix. In terms of biological role, type I collagen is a member of group I collagen (fibrillar forming collagen). The protein is Collagen alpha-2(I) chain (Col1a2) of Mus musculus (Mouse).